A 693-amino-acid chain; its full sequence is Translation factor GUF1 homolog, chloroplastic (693 aa).

The transit peptide at 1–51 (MATDLSSSSTLLLSRNCKTPPFYHTTNSLSLSKTHHLYASRNAVVSRLRLL) directs the protein to the chloroplast. One can recognise a tr-type G domain in the interval 86–267 (SNIRNFCIIA…AIVERIPSPR (182 aa)). GTP contacts are provided by residues 95–102 (AHIDHGKS), 160–164 (DTPGH), and 214–217 (NKID).

This sequence belongs to the TRAFAC class translation factor GTPase superfamily. Classic translation factor GTPase family. LepA subfamily.

Its subcellular location is the plastid. It localises to the chloroplast. The enzyme catalyses GTP + H2O = GDP + phosphate + H(+). Its function is as follows. Promotes chloroplast protein synthesis. May act as a fidelity factor of the translation reaction, by catalyzing a one-codon backward translocation of tRNAs on improperly translocated ribosomes. This is Translation factor GUF1 homolog, chloroplastic from Ricinus communis (Castor bean).